The primary structure comprises 283 residues: Bifunctional protein FolD (283 aa).

NADP(+) is bound by residues 166 to 168 (GAS) and Ile232.

Belongs to the tetrahydrofolate dehydrogenase/cyclohydrolase family. In terms of assembly, homodimer.

The enzyme catalyses (6R)-5,10-methylene-5,6,7,8-tetrahydrofolate + NADP(+) = (6R)-5,10-methenyltetrahydrofolate + NADPH. It catalyses the reaction (6R)-5,10-methenyltetrahydrofolate + H2O = (6R)-10-formyltetrahydrofolate + H(+). The protein operates within one-carbon metabolism; tetrahydrofolate interconversion. Catalyzes the oxidation of 5,10-methylenetetrahydrofolate to 5,10-methenyltetrahydrofolate and then the hydrolysis of 5,10-methenyltetrahydrofolate to 10-formyltetrahydrofolate. The polypeptide is Bifunctional protein FolD (Mannheimia succiniciproducens (strain KCTC 0769BP / MBEL55E)).